Here is a 290-residue protein sequence, read N- to C-terminus: Protein CREG2 (290 aa).

An N-terminal signal peptide occupies residues 1–31 (MSVRRGRRPARPGTRLSWLLCCSALLSPAAG). Residues asparagine 165 and asparagine 166 are each glycosylated (N-linked (GlcNAc...) asparagine).

The protein belongs to the CREG family. In terms of processing, it is not sure whether N-glycosylation is on Asn-165 and/or Asn-166. Brain specific mainly in the limbic system and faintly in the spinal cord but not in cerebellum.

It localises to the secreted. In Homo sapiens (Human), this protein is Protein CREG2 (CREG2).